The following is a 464-amino-acid chain: tRNA(Ile)-lysidine synthase (464 aa).

Residue 26 to 31 (SGGPDS) coordinates ATP.

Belongs to the tRNA(Ile)-lysidine synthase family.

It localises to the cytoplasm. The catalysed reaction is cytidine(34) in tRNA(Ile2) + L-lysine + ATP = lysidine(34) in tRNA(Ile2) + AMP + diphosphate + H(+). In terms of biological role, ligates lysine onto the cytidine present at position 34 of the AUA codon-specific tRNA(Ile) that contains the anticodon CAU, in an ATP-dependent manner. Cytidine is converted to lysidine, thus changing the amino acid specificity of the tRNA from methionine to isoleucine. This is tRNA(Ile)-lysidine synthase from Geobacillus kaustophilus (strain HTA426).